Reading from the N-terminus, the 197-residue chain is MVFHRLSRLGSRIVKELPRERHLSMCGKRILQRSYGQYLQSSPMLQRQTRSFKEALFSNNHKFCTSFSTTSEKGGEKTEKINVTFVDKDGEEIHIKVPVGMNILEAAHENDIELEGACEGSLACSTCHVIVMDTKYYNKLEEPTDEENDMLDLAFGLTATSRLGCQVIAKPELDGVRLAIPSATRNFAVDGFVPKPH.

The N-terminal 74 residues, 1–74 (MVFHRLSRLG…TSFSTTSEKG (74 aa)), are a transit peptide targeting the mitochondrion. The region spanning 81-184 (INVTFVDKDG…GVRLAIPSAT (104 aa)) is the 2Fe-2S ferredoxin-type domain. [2Fe-2S] cluster-binding residues include cysteine 118, cysteine 124, cysteine 127, and cysteine 165.

The protein belongs to the adrenodoxin/putidaredoxin family. [2Fe-2S] cluster serves as cofactor.

The protein localises to the mitochondrion. Its function is as follows. Associates with the adrenodoxin reductase MFDR to form an efficient low potential electron transfer chain that is able to reduce cytochrome C. The polypeptide is Adrenodoxin-like protein 2, mitochondrial (Arabidopsis thaliana (Mouse-ear cress)).